Reading from the N-terminus, the 262-residue chain is Acyl-[acyl-carrier-protein]--UDP-N-acetylglucosamine O-acyltransferase (262 aa).

Belongs to the transferase hexapeptide repeat family. LpxA subfamily. In terms of assembly, homotrimer.

The protein localises to the cytoplasm. It catalyses the reaction a (3R)-hydroxyacyl-[ACP] + UDP-N-acetyl-alpha-D-glucosamine = a UDP-3-O-[(3R)-3-hydroxyacyl]-N-acetyl-alpha-D-glucosamine + holo-[ACP]. It functions in the pathway glycolipid biosynthesis; lipid IV(A) biosynthesis; lipid IV(A) from (3R)-3-hydroxytetradecanoyl-[acyl-carrier-protein] and UDP-N-acetyl-alpha-D-glucosamine: step 1/6. In terms of biological role, involved in the biosynthesis of lipid A, a phosphorylated glycolipid that anchors the lipopolysaccharide to the outer membrane of the cell. The chain is Acyl-[acyl-carrier-protein]--UDP-N-acetylglucosamine O-acyltransferase from Salmonella schwarzengrund (strain CVM19633).